A 135-amino-acid chain; its full sequence is T-cell receptor gamma chain V region 5/10-13 (135 aa).

An N-terminal signal peptide occupies residues 1–18; that stretch reads MLLLRWPTFCCLWVFGLG. The v segment stretch occupies residues 19-114; sequence QLEQTELSVT…DEATYYCAVC (96 aa). Positions 115 to 135 are j segment; the sequence is RSGTSWVKIFAKGTKLVVIPP.

The protein is T-cell receptor gamma chain V region 5/10-13 (Tcrg-V1) of Mus musculus (Mouse).